Here is a 225-residue protein sequence, read N- to C-terminus: NAD(P)H-quinone oxidoreductase subunit K, chloroplastic (225 aa).

[4Fe-4S] cluster is bound by residues Cys-43, Cys-44, Cys-108, and Cys-139.

It belongs to the complex I 20 kDa subunit family. NDH is composed of at least 16 different subunits, 5 of which are encoded in the nucleus. Requires [4Fe-4S] cluster as cofactor.

It localises to the plastid. It is found in the chloroplast thylakoid membrane. The catalysed reaction is a plastoquinone + NADH + (n+1) H(+)(in) = a plastoquinol + NAD(+) + n H(+)(out). It catalyses the reaction a plastoquinone + NADPH + (n+1) H(+)(in) = a plastoquinol + NADP(+) + n H(+)(out). Its function is as follows. NDH shuttles electrons from NAD(P)H:plastoquinone, via FMN and iron-sulfur (Fe-S) centers, to quinones in the photosynthetic chain and possibly in a chloroplast respiratory chain. The immediate electron acceptor for the enzyme in this species is believed to be plastoquinone. Couples the redox reaction to proton translocation, and thus conserves the redox energy in a proton gradient. In Manihot esculenta (Cassava), this protein is NAD(P)H-quinone oxidoreductase subunit K, chloroplastic.